Here is a 37-residue protein sequence, read N- to C-terminus: Large ribosomal subunit protein bL36c (37 aa).

The protein belongs to the bacterial ribosomal protein bL36 family.

It is found in the plastid. It localises to the chloroplast. This chain is Large ribosomal subunit protein bL36c, found in Physcomitrium patens (Spreading-leaved earth moss).